The following is a 349-amino-acid chain: tRNA pseudouridine synthase D (349 aa).

Asp-77 acts as the Nucleophile in catalysis. Residues 151–309 (GVPNYFGEQR…ETIDESTLKL (159 aa)) form the TRUD domain.

This sequence belongs to the pseudouridine synthase TruD family.

It carries out the reaction uridine(13) in tRNA = pseudouridine(13) in tRNA. Its function is as follows. Responsible for synthesis of pseudouridine from uracil-13 in transfer RNAs. The sequence is that of tRNA pseudouridine synthase D from Pseudoalteromonas translucida (strain TAC 125).